Consider the following 255-residue polypeptide: Putative glycyl-radical enzyme activating enzyme MJ1632 (255 aa).

Positions 30 to 245 constitute a Radical SAM core domain; sequence SHISLSDKIT…SNVSCSLDFK (216 aa). [4Fe-4S] cluster is bound by residues C45, C49, and C52. S-adenosyl-L-methionine is bound by residues 51–53, G88, and 134–136; these read YCF and DLK.

It belongs to the organic radical-activating enzymes family. It depends on [4Fe-4S] cluster as a cofactor.

The enzyme catalyses glycyl-[protein] + reduced [flavodoxin] + S-adenosyl-L-methionine = glycin-2-yl radical-[protein] + semiquinone [flavodoxin] + 5'-deoxyadenosine + L-methionine + H(+). This chain is Putative glycyl-radical enzyme activating enzyme MJ1632, found in Methanocaldococcus jannaschii (strain ATCC 43067 / DSM 2661 / JAL-1 / JCM 10045 / NBRC 100440) (Methanococcus jannaschii).